The sequence spans 211 residues: Urease accessory protein UreE (211 aa).

Residues 134–211 form a disordered region; the sequence is FDPEGGAYAP…DHHGHGHEHK (78 aa). The span at 147 to 202 shows a compositional bias: basic and acidic residues; the sequence is PSHDHAGHDHAHDSHAHHDHDHGKHAQHDHGKHDHAHHDHAAHDDHHVHDEHCGHD.

Belongs to the UreE family.

It localises to the cytoplasm. Involved in urease metallocenter assembly. Binds nickel. Probably functions as a nickel donor during metallocenter assembly. The polypeptide is Urease accessory protein UreE (Rhodopseudomonas palustris (strain BisB18)).